Here is a 176-residue protein sequence, read N- to C-terminus: Myelin basic protein (176 aa).

The span at 1-11 (MASQKHSRGHG) shows a compositional bias: basic residues. Residues 1 to 176 (MASQKHSRGH…SRSSSPMARR (176 aa)) are disordered. A2 bears the N-acetylalanine mark. S7 carries the phosphoserine modification. 2 positions are modified to citrulline: R25 and R33. The residue at position 58 (S58) is a Phosphoserine. At N97 the chain carries Deamidated asparagine. Phosphothreonine is present on T103. Residue Q108 is modified to Deamidated glutamine. Symmetric dimethylarginine is present on R111. Position 117 is a phosphoserine (S117). A compositionally biased stretch (basic and acidic residues) spans 134 to 153 (SLEHHKSSYKGYKDPHREGH). The segment covering 166–176 (RSRSSSPMARR) has biased composition (polar residues). A phosphoserine mark is found at S167 and S171. A Citrulline modification is found at R176.

The protein belongs to the myelin basic protein family. As to quaternary structure, homodimer. As in other animals, several charge isomers may be produced as a result of optional post-translational modifications, such as phosphorylation of serine or threonine residues, deamidation of glutamine or asparagine residues, citrullination and methylation of arginine residues.

The protein localises to the myelin membrane. Functionally, is, with PLP, the most abundant protein component of the myelin membrane in the CNS. Plays a role in both the formation and stabilization of this compact multilayer arrangement of bilayers. Each splice variant and charge isomer may have a specialized function in the assembly of an optimized, biochemically functional myelin membrane. The protein is Myelin basic protein (mbp) of Xenopus laevis (African clawed frog).